A 164-amino-acid chain; its full sequence is Cytochrome c-type biogenesis protein CcmE (164 aa).

Residues 1-8 lie on the Cytoplasmic side of the membrane; sequence MNPRRKSR. The chain crosses the membrane as a helical; Signal-anchor for type II membrane protein span at residues 9–29; it reads LYLAVVVLIGIGLTTTLVLYA. Topologically, residues 30-164 are periplasmic; sequence LRSNIDLFYT…NSTAAQGNAS (135 aa). Heme contacts are provided by H130 and Y134. Basic and acidic residues predominate over residues 131–150; that stretch reads DEKYTPPEVKEAMKENHTRP. Residues 131–164 form a disordered region; that stretch reads DEKYTPPEVKEAMKENHTRPAEAYNSTAAQGNAS. Positions 154–164 are enriched in polar residues; that stretch reads YNSTAAQGNAS.

The protein belongs to the CcmE/CycJ family.

Its subcellular location is the cell inner membrane. In terms of biological role, heme chaperone required for the biogenesis of c-type cytochromes. Transiently binds heme delivered by CcmC and transfers the heme to apo-cytochromes in a process facilitated by CcmF and CcmH. This Yersinia enterocolitica serotype O:8 / biotype 1B (strain NCTC 13174 / 8081) protein is Cytochrome c-type biogenesis protein CcmE.